An 875-amino-acid chain; its full sequence is Neurotrypsin (875 aa).

The N-terminal stretch at 1–20 (MTLARFVLALMLGALPEVVG) is a signal peptide. An N-linked (GlcNAc...) asparagine glycan is attached at N26. A disordered region spans residues 29–88 (LHHSHRHSPPAGPHYPYYLPTQQRPPRTRPPPPLPRFPRPPRALPAQRPHALQAGHTPRP). Positions 56 to 71 (TRPPPPLPRFPRPPRA) are enriched in pro residues. Residues 93–165 (CPAGEPWVSV…GKVDWGYCDC (73 aa)) form the Kringle domain. Cystine bridges form between C93/C165, C109/C149, C138/C163, C195/C259, C208/C269, C239/C249, C305/C369, C318/C379, C349/C359, C412/C475, C425/C485, C455/C465, C525/C589, C538/C599, C569/C579, C619/C750, C661/C677, C765/C831, C794/C808, and C821/C850. 4 SRCR domains span residues 170–271 (VRLR…TCSF), 280–381 (IRLA…SCTP), 387–487 (IRLA…ACYP), and 500–601 (VRLM…ICDY). A zymogen activation region region spans residues 619 to 630 (CGLRLLHRRQKR). Residues 631–874 (IIGGKNSLRG…FVPWIKSVTK (244 aa)) enclose the Peptidase S1 domain. The Charge relay system role is filled by H676. Residue N683 is glycosylated (N-linked (GlcNAc...) asparagine). Residue D726 is the Charge relay system of the active site. Catalysis depends on S825, which acts as the Charge relay system.

Belongs to the peptidase S1 family. As to expression, brain and Leydig cells of the testis.

The protein localises to the secreted. In terms of biological role, plays a role in neuronal plasticity and the proteolytic action may subserve structural reorganizations associated with learning and memory operations. This chain is Neurotrypsin (PRSS12), found in Homo sapiens (Human).